Consider the following 2896-residue polypeptide: Hemocyanin G-type, units Oda to Odg (2896 aa).

A functional unit Oda region spans residues 1 to 419 (NLIRKDVDAL…ADMVVVDKTG (419 aa)). H41 provides a ligand contact to Cu cation. A disulfide bridge connects residues C47 and C57. Positions 58 to 60 (CLH) form a cross-link, 2'-(S-cysteinyl)-histidine (Cys-His). Residues H60, H69, H178, H182, and H209 each contribute to the Cu cation site. Cystine bridges form between C168/C234 and C321/C333. N386 carries an N-linked (GlcNAc...) asparagine glycan. Residues 420–834 (LNVRKDLQSL…KESGVVFDEL (415 aa)) are functional unit Odb. H460 is a Cu cation binding site. Cysteines 466 and 477 form a disulfide. The segment at residues 478 to 480 (CVH) is a cross-link (2'-(S-cysteinyl)-histidine (Cys-His)). Cu cation-binding residues include H480, H489, H601, H605, and H632. C591 and C657 are oxidised to a cystine. The N-linked (GlcNAc...) asparagine glycan is linked to N804. The segment at 835–1254 (YRSRRDVSSL…GIWVEPVTSA (420 aa)) is functional unit Odc. A Cu cation-binding site is contributed by H875. Residues C881 and C892 are joined by a disulfide bond. Residues 893–895 (CHH) constitute a cross-link (2'-(S-cysteinyl)-histidine (Cys-His)). Residues H895, H904, H1013, H1017, H1044, and H1292 each coordinate Cu cation. C1003 and C1070 form a disulfide bridge. A functional unit Odd region spans residues 1255-1667 (NRIRKNLNAL…ADIKSEEGNE (413 aa)). An intrachain disulfide couples C1298 to C1309. Residues 1310 to 1312 (CIH) constitute a cross-link (2'-(S-cysteinyl)-histidine (Cys-His)). The Cu cation site is built by H1312, H1321, H1425, H1429, and H1456. C1415 and C1482 are oxidised to a cystine. The N-linked (GlcNAc...) asparagine glycan is linked to N1496. C1571 and C1581 are joined by a disulfide. N1634 carries an N-linked (GlcNAc...) asparagine glycan. Residues 1668-2085 (YLVRKNVERL…NEDADIDTPL (418 aa)) form a functional unit Ode region. H1708 contributes to the Cu cation binding site. Residues C1714 and C1725 are joined by a disulfide bond. The 2'-(S-cysteinyl)-histidine (Cys-His) cross-link spans 1726–1728 (CLH). 5 residues coordinate Cu cation: H1728, H1737, H1849, H1853, and H1880. 2 cysteine pairs are disulfide-bonded: C1839/C1906 and C1997/C2003. A glycan (N-linked (GlcNAc...) asparagine) is linked at N2055. The interval 2086–2502 (NHIRRNVESL…REVHKKTVGD (417 aa)) is functional unit Odf. H2126 provides a ligand contact to Cu cation. A disulfide bridge links C2131 with C2141. Positions 2142–2144 (CLH) form a cross-link, 2'-(S-cysteinyl)-histidine (Cys-His). Residues H2144 and H2153 each contribute to the Cu cation site. N2201 carries N-linked (GlcNAc...) asparagine glycosylation. Cystine bridges form between C2252–C2319 and C2406–C2411. The Cu cation site is built by H2262, H2266, and H2293. Residues 2503–2896 (AIIRKNVNSL…VFLAPAKTTH (394 aa)) are functional unit Odg. Position 2543 (H2543) interacts with Cu cation. C2549 and C2559 are oxidised to a cystine. N2553 carries an N-linked (GlcNAc...) asparagine glycan. Residues 2560–2562 (CQH) constitute a cross-link (2'-(S-cysteinyl)-histidine (Cys-His)). Cu cation contacts are provided by H2562, H2571, H2671, H2675, and H2702. 2 disulfides stabilise this stretch: C2661–C2728 and C2815–C2821.

It belongs to the tyrosinase family. Hemocyanin subfamily. In terms of assembly, decamers of large identical subunits (350 kDa), each containing 7 globular oxygen-binding functional units: ODA, ODB, ODC, ODD, ODE, ODF, and ODG. Decamer formation requires the presence of magnesium ions. It depends on Cu(2+) as a cofactor.

Hemocyanins are copper-containing oxygen carriers occurring freely dissolved in the hemolymph of many mollusks and arthropods. This chain is Hemocyanin G-type, units Oda to Odg (ODHCY), found in Enteroctopus dofleini (North Pacific giant octopus).